Consider the following 587-residue polypeptide: Tail sheath protein (587 aa).

This sequence belongs to the myoviridae tail sheath protein family. Homomultimer.

The protein localises to the virion. Its subcellular location is the host cytoplasm. Polymerizes as an extended structure around the baseplate-tail tube complex. During ejection, the sheath shifts to a contracted form, thereby making the inner tail tube protrude through the host cell envelope. This chain is Tail sheath protein, found in Staphylococcus phage Twort (strain DSM 17442 / HER 48) (Bacteriophage Twort).